Reading from the N-terminus, the 1488-residue chain is Chromosome partition protein MukB (1488 aa).

34-41 (GGNGAGKS) is a binding site for ATP. 3 coiled-coil regions span residues 326–418 (LEAD…QYNQ), 444–472 (LDTF…QTAH), and 509–602 (RHLA…QRAP). The segment at 666–783 (PGGAEDQRLN…SLPIFGRAAR (118 aa)) is flexible hinge. Coiled coils occupy residues 835–923 (EAEI…AKLE), 977–1116 (EMLS…AKAG), and 1209–1265 (VEAI…LQSV). The interval 1049–1074 (ADSGAEERARQRRDELHAQLSNNRSR) is disordered. Positions 1051 to 1065 (SGAEERARQRRDELH) are enriched in basic and acidic residues.

Belongs to the SMC family. MukB subfamily. Homodimerization via its hinge domain. Binds to DNA via its C-terminal region. Interacts, and probably forms a ternary complex, with MukE and MukF via its C-terminal region. The complex formation is stimulated by calcium or magnesium. Interacts with tubulin-related protein FtsZ.

It localises to the cytoplasm. Its subcellular location is the nucleoid. Functionally, plays a central role in chromosome condensation, segregation and cell cycle progression. Functions as a homodimer, which is essential for chromosome partition. Involved in negative DNA supercoiling in vivo, and by this means organize and compact chromosomes. May achieve or facilitate chromosome segregation by condensation DNA from both sides of a centrally located replisome during cell division. The sequence is that of Chromosome partition protein MukB from Salmonella typhi.